The primary structure comprises 480 residues: Ribosomal RNA small subunit methyltransferase F (480 aa).

Residues 126–132 (AAAPGSK), E150, D177, and D195 each bind S-adenosyl-L-methionine. C248 acts as the Nucleophile in catalysis.

The protein belongs to the class I-like SAM-binding methyltransferase superfamily. RsmB/NOP family.

Its subcellular location is the cytoplasm. The enzyme catalyses cytidine(1407) in 16S rRNA + S-adenosyl-L-methionine = 5-methylcytidine(1407) in 16S rRNA + S-adenosyl-L-homocysteine + H(+). Functionally, specifically methylates the cytosine at position 1407 (m5C1407) of 16S rRNA. The protein is Ribosomal RNA small subunit methyltransferase F of Cronobacter sakazakii (strain ATCC BAA-894) (Enterobacter sakazakii).